We begin with the raw amino-acid sequence, 420 residues long: Putative polyketide beta-ketoacyl synthase 1 (420 aa).

The Ketosynthase family 3 (KS3) domain maps to Gln-3–Ser-414. Active-site for beta-ketoacyl synthase activity residues include Cys-169, His-307, and His-344.

It belongs to the thiolase-like superfamily. Beta-ketoacyl-ACP synthases family.

It functions in the pathway antifungal biosynthesis; monensin biosynthesis. This chain is Putative polyketide beta-ketoacyl synthase 1, found in Streptomyces virginiae (Streptomyces cinnamonensis).